The chain runs to 372 residues: N-methyl-L-tryptophan oxidase (372 aa).

4–34 (DLIIIGSGSVGAAAGYYATRAGLKVLMTDAH) lines the FAD pocket. At Cys307 the chain carries S-8alpha-FAD cysteine.

It belongs to the MSOX/MTOX family. MTOX subfamily. As to quaternary structure, monomer. FAD serves as cofactor.

It carries out the reaction N(alpha)-methyl-L-tryptophan + O2 + H2O = L-tryptophan + formaldehyde + H2O2. Its function is as follows. Catalyzes the oxidative demethylation of N-methyl-L-tryptophan. The sequence is that of N-methyl-L-tryptophan oxidase from Salmonella newport (strain SL254).